The following is a 1724-amino-acid chain: MSEILCQWLNQELRVSRTVSPKSFAKAFSNGYLIGEVLFKFELQSDFAEFSESRGSTAKLNNFSRLQPTLHLLGLQFDQNVAQSIITEKPGAATKLLYQLYIALQKKKKTGLTGLEIQTMQPQTNLRLQTLKSEAFREQRLNRRRQNEIMAKIQAAIIQIPKPESNRTLKAIEAQKLMKKKKEAEDVANEIKKFEALIKKDLQIKESVSKTSLETTDQTTAELLNTYSDDDYIKKIQKRLEEDAFAREQREKRRRRLLMDQLMAHEAQEEAYREEQLIHRLMRQSQQERRIAVQLMHVRHEKEVLWQNRIFREKQFEERRLKDFQDALDREAALAKQAKIDFAEQTLREKEIHEKISVERAQQRYKKHYGICAEILDQMLDLCTKVADYRLLTNNLIPHKMMHDWKELFFSGIPIYEQTSLTHGQTEPTEDHRAEVKKRNLLDSKDYEDYKNMVGEWALPEDMVNSSPPSNNSILGHVLLRLIEKADPSASNAEATELPSLAVKGCILGKTLSGKTTVLKSLQNDFPVHVLSIDTLVQEAIQAFHERQKSGKTPPTQEDDKRDPVVNQEKVSKTQDKNVLAVSPVPGDRTSQKEGVKINEFEQFRSSDSFLSLSMRAQLGAKSELMLRRGKSIPDILLVSILVNAIKEIPVDQSWVLDGFPITLNQAKLLEEALTGYKRKFLQLKKKKEQMPTLALDPSTSTEVSLLPSALDFVILLDISDNSSLARTNDIIAKEISHEISHENVGRPGTGTSQDNKSEDRNLRDHIQHRIVGFLDNWPLLEEWFTQPKNILTKVNAEIDEALLCQKVKEIFATETVNKKIKVEKTLEEKETEKKAGAPPAEPPAMSPPLSSEAEKDKELHQAKTPGKGKTQSVSPKGKAQGGKVSVKKSPVGSAEVSPTPTAPPPPKAGTEEWVYVNEPIPEELPSFLVPYWELIEKSYINHIKTVLRHLRERQHNVLSYLYETRTSFQEFLRRPDHKQDFVSQWQADFNSVPEDLWEDEETKAELHQRVNDLRDRLWDICEARKEEAEQERLDIINESWLQDSIGITMNHFFSLMQAEVNRFQDTKRLLQDYYRAMESKIPLEDSKKFTRVPLVQLDGKEISESQLRIPLVPRISNSPENSAVKPKVGTFLKGRSDPPLEVLEANFEIDEKILLDTWQQASLAISNMVAAEVHQRLTEEEKEPPQLDSKEKSPQSGANKKAKKEKEAPKKKKTDKKGKGKSSPVAEVSPVTVTPEEMAEMEKRNELRLRIKEEHLAALQTEEQAAQFRLELIKLKALSVLEDLVTKVIDVYRLMEKWLGKRYLNEMASIQKLTELARYHIETATKIQNEIYLSQEDFYINGDIKVFPDPSPPTRPPPVEREENGTLTIEQLDNLRDQFLDMAPKGIIGNKAFSDILLDLITLNLGTNNFPSSWMHLSQLDLQEITSLLTVNTEFVDWRKFLMVTAMPWPMALEDELLDTLQRFKALDEAQTGTITYEQYKQAGLWFSGDEDIKIPENPLEPLPFNRQEHLIEFFFRLFADCEKEPPQLDYTQMLLYFACHPDTLEGVYRALSVAVGTHIFRQVETPMLMAEKTSISTVSPIEEFPETEESSAKEDRELKEEKDDQKEEEIPENANTEKISMETLLKVFGGGNEVLDANRFASYLKSENIYAENFIKTFQDLGARNLEPIAVNILLKHPYIQDLIANYVDYKFPDIKMILQRSEHAQGSDGERSPSRLTDEKK.

The Calponin-homology (CH) domain occupies 1-105 (MSEILCQWLN…LLYQLYIALQ (105 aa)). Coiled-coil stretches lie at residues 170 to 203 (KAIE…KDLQ) and 255 to 351 (RRLL…REKE). Positions 545–576 (HERQKSGKTPPTQEDDKRDPVVNQEKVSKTQD) are disordered. A compositionally biased stretch (basic and acidic residues) spans 558 to 576 (EDDKRDPVVNQEKVSKTQD). Positions 665–691 (NQAKLLEEALTGYKRKFLQLKKKKEQM) form a coiled coil. Positions 828-910 (EEKETEKKAG…PTAPPPPKAG (83 aa)) are disordered. Residues 853–862 (EAEKDKELHQ) are compositionally biased toward basic and acidic residues. Residues 995–1021 (EDLWEDEETKAELHQRVNDLRDRLWDI) adopt a coiled-coil conformation. A compositionally biased stretch (basic and acidic residues) spans 1177 to 1194 (RLTEEEKEPPQLDSKEKS). 3 disordered regions span residues 1177-1241 (RLTE…EMAE), 1580-1618 (VSPI…NANT), and 1704-1724 (SEHA…DEKK). The span at 1210 to 1221 (PKKKKTDKKGKG) shows a compositional bias: basic residues. The tract at residues 1228–1580 (EVSPVTVTPE…MAEKTSISTV (353 aa)) is interaction with IFT20. Basic and acidic residues predominate over residues 1592-1607 (SSAKEDRELKEEKDDQ).

As to quaternary structure, interacts (via C-terminus) with IFT20. Interacts with DYNC1I2. Highly expressed in testis, where it primarily localizes to late spermatocytes, round spermatids and elongating spermatids (at protein level). Found in Sertoli cells of the testis (at protein level). Expressed at lower levels in epididymis (at protein level). Detected in lung, brain, liver and kidney. Also detected in bone, cartilage, trachea, pituitary gland and eye. Expressed in osteoblasts and chondrocytes.

Its subcellular location is the cell projection. It is found in the cilium. The protein localises to the flagellum. The protein resides in the cytoplasm. It localises to the cytoskeleton. Its subcellular location is the golgi apparatus. Its function is as follows. Required for correct axoneme development in spermatozoa. Important for normal development of the manchette and sperm head morphology. Essential for male fertility. Plays a role in localization of the intraflagellar transport protein IFT20 to the manchette, suggesting function as an adapter for dynein-mediated protein transport during spermatogenesis. Also plays a role in bone growth where it seems to be required for normal osteoblast differentiation. The chain is Sperm flagellar protein 2 (Spef2) from Mus musculus (Mouse).